We begin with the raw amino-acid sequence, 164 residues long: Ribosome maturation factor RimM (164 aa).

A PRC barrel domain is found at 92 to 164 (PDSEYYVANL…FVVIVPPEFI (73 aa)).

The protein belongs to the RimM family. In terms of assembly, binds ribosomal protein uS19.

The protein resides in the cytoplasm. An accessory protein needed during the final step in the assembly of 30S ribosomal subunit, possibly for assembly of the head region. Essential for efficient processing of 16S rRNA. May be needed both before and after RbfA during the maturation of 16S rRNA. It has affinity for free ribosomal 30S subunits but not for 70S ribosomes. This chain is Ribosome maturation factor RimM, found in Orientia tsutsugamushi (strain Ikeda) (Rickettsia tsutsugamushi).